Consider the following 327-residue polypeptide: Putative HTH-type transcriptional regulatory protein MmarC6_0210 (327 aa).

An HTH cro/C1-type domain is found at 128 to 183; sequence LRETREKLKISVGELAEISRVSRKTIYKYEQNEANPSAEVAIKIEEYLDVPLIKGI. Residues 139-158 constitute a DNA-binding region (H-T-H motif); that stretch reads VGELAEISRVSRKTIYKYEQ.

The chain is Putative HTH-type transcriptional regulatory protein MmarC6_0210 from Methanococcus maripaludis (strain C6 / ATCC BAA-1332).